Reading from the N-terminus, the 103-residue chain is Small ribosomal subunit protein uS10 (103 aa).

It belongs to the universal ribosomal protein uS10 family. In terms of assembly, part of the 30S ribosomal subunit.

Functionally, involved in the binding of tRNA to the ribosomes. This chain is Small ribosomal subunit protein uS10, found in Baumannia cicadellinicola subsp. Homalodisca coagulata.